The following is a 245-amino-acid chain: 5-oxoprolinase subunit A (245 aa).

This sequence belongs to the LamB/PxpA family. In terms of assembly, forms a complex composed of PxpA, PxpB and PxpC.

It catalyses the reaction 5-oxo-L-proline + ATP + 2 H2O = L-glutamate + ADP + phosphate + H(+). Functionally, catalyzes the cleavage of 5-oxoproline to form L-glutamate coupled to the hydrolysis of ATP to ADP and inorganic phosphate. The polypeptide is 5-oxoprolinase subunit A (Neisseria meningitidis serogroup C (strain 053442)).